The following is a 447-amino-acid chain: Phospholipase A(1) LCAT3 (447 aa).

Catalysis depends on Ser177, which acts as the Acyl-ester intermediate. Catalysis depends on charge relay system residues Asp384 and His409.

It belongs to the AB hydrolase superfamily. Lipase family.

Its subcellular location is the microsome membrane. The enzyme catalyses a 1,2-diacyl-sn-glycero-3-phosphocholine + H2O = a 2-acyl-sn-glycero-3-phosphocholine + a fatty acid + H(+). Hydrolyzes the sn-1 acylester bond of phospholipids. Phosphatidylcholine, phosphatidylethanolamine and phosphatidic acid can be used as substrates. Weak activity with lysophosphatidylcholine and no activity with tripalmitoylglycerol and cholesteryl oleate. Seems to have a preference for unsaturated fatty acids at the sn-1 position. The polypeptide is Phospholipase A(1) LCAT3 (LCAT3) (Arabidopsis thaliana (Mouse-ear cress)).